We begin with the raw amino-acid sequence, 284 residues long: Diaminopimelate epimerase (284 aa).

Residues Asn-20, Gln-53, and Asn-73 each coordinate substrate. Cys-82 serves as the catalytic Proton donor. Residues 83-84 (GN), Asn-167, Asn-200, and 218-219 (ER) each bind substrate. The Proton acceptor role is filled by Cys-227. 228 to 229 (GS) is a binding site for substrate.

The protein belongs to the diaminopimelate epimerase family. In terms of assembly, homodimer.

The protein localises to the cytoplasm. It carries out the reaction (2S,6S)-2,6-diaminopimelate = meso-2,6-diaminopimelate. It participates in amino-acid biosynthesis; L-lysine biosynthesis via DAP pathway; DL-2,6-diaminopimelate from LL-2,6-diaminopimelate: step 1/1. Catalyzes the stereoinversion of LL-2,6-diaminopimelate (L,L-DAP) to meso-diaminopimelate (meso-DAP), a precursor of L-lysine and an essential component of the bacterial peptidoglycan. The sequence is that of Diaminopimelate epimerase from Xylella fastidiosa (strain M12).